The primary structure comprises 333 residues: Outer membrane protein assembly factor BamC (333 aa).

A signal peptide spans 1–18; it reads MKKCLFPLSVLAVIVATG. Residue Cys-19 is the site of N-palmitoyl cysteine attachment. Cys-19 is lipidated: S-diacylglycerol cysteine.

This sequence belongs to the BamC family. Part of the Bam complex.

Its subcellular location is the cell outer membrane. Its function is as follows. Part of the outer membrane protein assembly complex, which is involved in assembly and insertion of beta-barrel proteins into the outer membrane. This Actinobacillus succinogenes (strain ATCC 55618 / DSM 22257 / CCUG 43843 / 130Z) protein is Outer membrane protein assembly factor BamC.